The sequence spans 254 residues: Alcohol dehydrogenase (254 aa).

NAD(+) is bound at residue 10–33 (FVAGLGGIGLDTSREIVKSGPKNL). Position 138 (Ser-138) interacts with substrate. The active-site Proton acceptor is Tyr-151.

The protein belongs to the short-chain dehydrogenases/reductases (SDR) family. Homodimer.

The enzyme catalyses a primary alcohol + NAD(+) = an aldehyde + NADH + H(+). It carries out the reaction a secondary alcohol + NAD(+) = a ketone + NADH + H(+). The sequence is that of Alcohol dehydrogenase (Adh) from Drosophila grimshawi (Hawaiian fruit fly).